A 296-amino-acid polypeptide reads, in one-letter code: Cadherin-4 (296 aa).

Cadherin domains lie at 1–101 (NVPE…RPEF), 102–216 (INQV…PPEF), and 217–296 (TTST…MLTI). The Extracellular segment spans residues 1–296 (NVPENSRGPF…ELNRAFMLTI (296 aa)). Residues N107 and N236 are each glycosylated (N-linked (GlcNAc...) asparagine).

The protein localises to the cell membrane. Its function is as follows. Cadherins are calcium-dependent cell adhesion proteins. They preferentially interact with themselves in a homophilic manner in connecting cells; cadherins may thus contribute to the sorting of heterogeneous cell types. May play an important role in retinal development. This is Cadherin-4 (Cdh4) from Rattus norvegicus (Rat).